We begin with the raw amino-acid sequence, 774 residues long: Cilium assembly protein DZIP1L (774 aa).

The segment at 166-189 (HTCHLCDKTFMNATFLRGHIQRRH) adopts a C2H2-type zinc-finger fold. Positions 204–450 (LGEVLEELRA…RKVLAALRKN (247 aa)) form a coiled coil. Disordered stretches follow at residues 415–435 (MPKA…ASLE), 515–674 (NKEV…ASSG), and 686–774 (KQLE…IPGW). Residues 421-433 (TEEDSSEEELEAS) are compositionally biased toward acidic residues. Residues Ser425 and Ser426 each carry the phosphoserine modification. A compositionally biased stretch (basic and acidic residues) spans 515–526 (NKEVSSRVKQRW). Residues 597 to 616 (GPSSTPVSPGSGLSSTPPFS) are compositionally biased toward low complexity.

Belongs to the DZIP C2H2-type zinc-finger protein family. As to quaternary structure, interacts with SEPTIN2.

It is found in the cytoplasm. It localises to the cytoskeleton. Its subcellular location is the cilium basal body. The protein localises to the microtubule organizing center. The protein resides in the centrosome. It is found in the centriole. In terms of biological role, involved in primary cilium formation. Probably acts as a transition zone protein required for localization of PKD1/PC1 and PKD2/PC2 to the ciliary membrane. This chain is Cilium assembly protein DZIP1L, found in Mus musculus (Mouse).